A 339-amino-acid polypeptide reads, in one-letter code: 4-hydroxy-2-oxovalerate aldolase (339 aa).

One can recognise a Pyruvate carboxyltransferase domain in the interval 7–257 (IRIMDTTLRD…QVGVDLYKIM (251 aa)). Residue 15–16 (RD) coordinates substrate. Aspartate 16 lines the Mn(2+) pocket. Histidine 19 (proton acceptor) is an active-site residue. Substrate is bound by residues serine 169 and histidine 196. Positions 196 and 198 each coordinate Mn(2+). Tyrosine 286 is a binding site for substrate.

It belongs to the 4-hydroxy-2-oxovalerate aldolase family.

The enzyme catalyses (S)-4-hydroxy-2-oxopentanoate = acetaldehyde + pyruvate. The chain is 4-hydroxy-2-oxovalerate aldolase from Pelotomaculum thermopropionicum (strain DSM 13744 / JCM 10971 / SI).